The following is a 598-amino-acid chain: Phenylalanine--tRNA ligase beta subunit, cytoplasmic (598 aa).

The B5 domain occupies L303–T383. 4 residues coordinate Mg(2+): D361, D367, E370, and D371.

The protein belongs to the phenylalanyl-tRNA synthetase beta subunit family. Type 2 subfamily. Tetramer of two alpha and two beta subunits. Requires Mg(2+) as cofactor.

It is found in the cytoplasm. It localises to the cytosol. It catalyses the reaction tRNA(Phe) + L-phenylalanine + ATP = L-phenylalanyl-tRNA(Phe) + AMP + diphosphate + H(+). This chain is Phenylalanine--tRNA ligase beta subunit, cytoplasmic, found in Arabidopsis thaliana (Mouse-ear cress).